The primary structure comprises 314 residues: MGEFGEVTLGVAQAAPVYFDREASTEKARGLIREAGEKGVDLLAFGETWLTGYPYWKDAPWSREYNDLRARYVANGVMIPGPETDALCQAAAEAGVDVAIGVVELEPGSLSSVYCTLLFISREGEILGRHRKLKPTDSERRYWSEGDATGLRVYERPYGRLSGLNCWEHLMMLPGYALAAQGTQFHVAAWPNMASSASELLSRAYAYQAGCYVLCAGGLGPAPGELPDGIAAESLDHLTGESCIIDPWGKVIAGPVSCEETLITARVSTASIYRRKSLTDVGGHYSRPDVFRFEVDRSERPRVVFRDGDVDDRG.

The 263-residue stretch at 7–269 (VTLGVAQAAP…ETLITARVST (263 aa)) folds into the CN hydrolase domain. Glu47 serves as the catalytic Proton acceptor. Lys132 serves as the catalytic Proton donor. Residue Cys166 is the Nucleophile of the active site.

Belongs to the carbon-nitrogen hydrolase superfamily. Nitrilase family.

It carries out the reaction a nitrile + 2 H2O = a carboxylate + NH4(+). In terms of biological role, nitrilases catalyze the mild hydrolytic conversion of organonitriles directly to the corresponding carboxylic acids. Catalyzes the production of aryllactic acid derivatives. Mediates the hydrolysis of cyanohydrin to (S)-phenyllactic acid. The polypeptide is Nitrilase 2 (Unknown prokaryotic organism).